An 890-amino-acid polypeptide reads, in one-letter code: MKFHEMGQTDLLEATNTSMKQGLTEKEVKKRLDKHGPNELQEGKKTSALLLFFAQFKDFMVLVLLAATLISGFLGEYVDAVAIIAIVFVNGILGFFQERRAEQSLQALKELSTPHVMALREGSWTKIPSKELVPGDIVKFTSGDRIGADVRIVEARSLEIEESALTGESIPVVKHADKLKKPDVSLGDITNMAFMGTIVTRGSGVGVVVGTGMNTAMGKIADMLESAGTLSTPLQRRLEQLGKILIVVALLLTVLVVAVGVIQGHDLYSMFLAGVSLAVAAIPEGLPAIVTVALSLGVQRMIKQKSIVRKLPAVETLGCASIICSDKTGTMTQNKMTVTHVWSGGKTWRVAGAGYEPKGSFTLNEKEISVNEHKPLQQMLLFGALCNNSNIEKRDGEYVLDGDPTEGALLTAARKGGFSKEFVESNYRVIEEFPFDSARKMMTVIVENQDRKRYIITKGAPDVLMQRSSRIYYDGSAALFSNERKAETEAVLRHLASQALRTIAVAYRPIKAGETPSMEQAEKDLTMLGLSGIIDPPRPEVRQAIKECREAGIKTVMITGDHVETAKAIAKDLRLLPKSGKIMDGKMLNELSQEELSHVVEDVYVFARVSPEHKLKIVKAYQENGHIVAMTGDGVNDAPAIKQADIGVSMGITGTDVAKEASSLVLVDDNFATIKSAIKEGRNIYENIRKFIRYLLASNVGEILVMLFAMLLALPLPLVPIQILWVNLVTDGLPAMALGMDQPEGDVMKRKPRHPKEGVFARKLGWKVVSRGFLIGVATILAFIIVYHRNPENLAYAQTIAFATLVLAQLIHVFDCRSETSVFSRNPFQNLYLIGAVLSSILLMLVVIYYPPLQPIFHTVAITPGDWMLVIGMSAIPTFLLAGSLLTRKK.

Over 1–47 (MKFHEMGQTDLLEATNTSMKQGLTEKEVKKRLDKHGPNELQEGKKTS) the chain is Cytoplasmic. A helical transmembrane segment spans residues 48–68 (ALLLFFAQFKDFMVLVLLAAT). At 69–78 (LISGFLGEYV) the chain is on the extracellular side. Residues 79 to 99 (DAVAIIAIVFVNGILGFFQER) traverse the membrane as a helical segment. Residues 100-238 (RAEQSLQALK…TLSTPLQRRL (139 aa)) lie on the Cytoplasmic side of the membrane. Residues 239–258 (EQLGKILIVVALLLTVLVVA) traverse the membrane as a helical segment. Over 259–270 (VGVIQGHDLYSM) the chain is Extracellular. The helical transmembrane segment at 271-288 (FLAGVSLAVAAIPEGLPA) threads the bilayer. Ca(2+) contacts are provided by Val-279, Ala-280, Ile-282, and Glu-284. Over 289–688 (IVTVALSLGV…KEGRNIYENI (400 aa)) the chain is Cytoplasmic. Asp-326 functions as the 4-aspartylphosphate intermediate in the catalytic mechanism. Mg(2+)-binding residues include Asp-633 and Asp-637. Residues 689-708 (RKFIRYLLASNVGEILVMLF) traverse the membrane as a helical segment. Ca(2+)-binding residues include Asn-699 and Glu-702. The Extracellular segment spans residues 709–718 (AMLLALPLPL). A helical transmembrane segment spans residues 719-739 (VPIQILWVNLVTDGLPAMALG). Residues Asn-727, Thr-730, and Asp-731 each contribute to the Ca(2+) site. The Cytoplasmic segment spans residues 740 to 759 (MDQPEGDVMKRKPRHPKEGV). Residues 760 to 782 (FARKLGWKVVSRGFLIGVATILA) traverse the membrane as a helical segment. The Extracellular segment spans residues 783 to 798 (FIIVYHRNPENLAYAQ). Residues 799-818 (TIAFATLVLAQLIHVFDCRS) traverse the membrane as a helical segment. The Cytoplasmic segment spans residues 819–830 (ETSVFSRNPFQN). A helical transmembrane segment spans residues 831–849 (LYLIGAVLSSILLMLVVIY). Residues 850 to 864 (YPPLQPIFHTVAITP) are Extracellular-facing. Residues 865-885 (GDWMLVIGMSAIPTFLLAGSL) form a helical membrane-spanning segment. Residues 886–890 (LTRKK) lie on the Cytoplasmic side of the membrane.

The protein belongs to the cation transport ATPase (P-type) (TC 3.A.3) family. Type IIA subfamily. Post-translationally, phosphorylated in a Ca(2+)-dependent manner starting 4 hours after shifting to sporulation medium.

Its subcellular location is the cell membrane. It carries out the reaction Ca(2+)(in) + ATP + H2O = Ca(2+)(out) + ADP + phosphate + H(+). This magnesium-dependent enzyme catalyzes the hydrolysis of ATP coupled with the transport of calcium. The polypeptide is Calcium-transporting ATPase (yloB) (Bacillus subtilis (strain 168)).